The primary structure comprises 300 residues: PTB domain-containing engulfment adapter protein 1 (300 aa).

The PID domain maps to 21-176 (AKHFIPYNAK…GGLQKRIQDL (156 aa)). Positions 160–199 (VETRKQIGGLQKRIQDLETENVELKKQLQVLEEQLMIAQV) form a coiled coil.

Belongs to the ced-6 family.

It localises to the cytoplasm. In terms of biological role, may function as an adapter protein. Required for efficient phagocytosis of apoptotic cells. May play a role in the internalization and endosomal trafficking of various lrp1 ligands. This chain is PTB domain-containing engulfment adapter protein 1 (gulp1), found in Danio rerio (Zebrafish).